Reading from the N-terminus, the 413-residue chain is O-methyltransferase kntB (413 aa).

S-adenosyl-L-methionine contacts are provided by residues 255 to 256, D280, 302 to 303, and R319; these read GG and NF. Catalysis depends on H322, which acts as the Proton acceptor.

Belongs to the class I-like SAM-binding methyltransferase superfamily. Cation-independent O-methyltransferase family. S-adenosyl-L-methionine serves as cofactor.

The protein operates within secondary metabolite biosynthesis. Functionally, non-reducing polyketide synthase; part of the gene cluster that mediates the biosynthesis of the bicoumarin kotanin. The non-reducing polyketide synthase ktnS first catalyzes the formation of the pentaketidic 4,7-dihydroxy-5-methylcoumarin from acetyl coenzyme A and 4 malonyl coenzyme A molecules. Further O-methylation by ktnB leads to the formation of 7-demethylsiderin. Then, an oxidative phenol coupling catalyzed by the cytochrome P450 monooxygenase ktnC forms the 8,8'-dimer P-orlandin via dimerization the monomeric precursor, 7-demethylsiderin. P-orlandin is subsequently O-methylated in a stepwise fashion to demethylkotanin and kotanin. This chain is O-methyltransferase kntB, found in Aspergillus niger (strain ATCC MYA-4892 / CBS 513.88 / FGSC A1513).